We begin with the raw amino-acid sequence, 102 residues long: Small ribosomal subunit protein uS10 (102 aa).

Residues 33–59 form a disordered region; sequence RMSGPIPLPTKRIRITTRKSPDGEGSA.

Belongs to the universal ribosomal protein uS10 family. As to quaternary structure, part of the 30S ribosomal subunit.

In terms of biological role, involved in the binding of tRNA to the ribosomes. The chain is Small ribosomal subunit protein uS10 from Pyrococcus furiosus (strain ATCC 43587 / DSM 3638 / JCM 8422 / Vc1).